A 397-amino-acid polypeptide reads, in one-letter code: Urea transporter 2 (397 aa).

A run of 5 helical transmembrane segments spans residues 68–85 (VMFV…IGLF), 92–109 (AIAG…ALIL), 115–135 (AIAS…IAVF), 143–163 (WWLL…SSAL), and 172–192 (LPVF…ATGH). The N-linked (GlcNAc...) asparagine glycan is linked to asparagine 210. 5 consecutive transmembrane segments (helical) span residues 239-257 (WTGG…LICL), 264-280 (TMGM…FDSI), 287-303 (FNST…FYVI), 309-329 (LLAV…TNVL), and 331-351 (VFGL…FLLL).

This sequence belongs to the urea transporter family. As to expression, kidney.

It localises to the apical cell membrane. Its subcellular location is the basolateral cell membrane. It catalyses the reaction urea(in) = urea(out). Its activity is regulated as follows. Inhibited by urea analogs and phloretin. Its function is as follows. Mediates the transport of urea driven by a concentration gradient across the cell membrane of the renal inner medullary collecting duct which is critical to the urinary concentrating mechanism. The protein is Urea transporter 2 (SLC14A2) of Oryctolagus cuniculus (Rabbit).